We begin with the raw amino-acid sequence, 127 residues long: Holo-[acyl-carrier-protein] synthase (127 aa).

The Mg(2+) site is built by aspartate 8 and glutamate 57.

Belongs to the P-Pant transferase superfamily. AcpS family. Requires Mg(2+) as cofactor.

It localises to the cytoplasm. It catalyses the reaction apo-[ACP] + CoA = holo-[ACP] + adenosine 3',5'-bisphosphate + H(+). In terms of biological role, transfers the 4'-phosphopantetheine moiety from coenzyme A to a Ser of acyl-carrier-protein. The chain is Holo-[acyl-carrier-protein] synthase from Vesicomyosocius okutanii subsp. Calyptogena okutanii (strain HA).